An 860-amino-acid chain; its full sequence is MQEQYRPEEIESKVQLHWDEKRTFEVTEDESKEKYYCLSMLPYPSGRLHMGHVRNYTIGDVIARYQRMLGKNVLQPIGWDAFGLPAEGAAVKNNTAPAPWTYDNIAYMKNQLKMLGFGYDWSRELATCTPEYYRWEQKFFTELYKKGLVYKKTSAVNWCPNDQTVLANEQVIDGCCWRCDTKVERKEIPQWFIKITAYADELLNDLDKLDHWPDTVKTMQRNWIGRSEGVEITFNVNDYDNMLTVYTTRPDTFMGCTYLAVAAGHPLAQKAAENNPELAAFIDECRNTKVAEAEMATMEKKGVDTGFKAVHPLTGEEIPVWAANFVLMEYGTGAVMAVPGHDQRDYEFASKYGLNIKPVILAADGSEPDLSQQALTEKGVLFNSGEFNGLDHEAAFNAIADKLTAMGVGERKVNYRLRDWGVSRQRYWGAPIPMVTLEDGTVMPTPDDQLPVILPEDVVMDGITSPIKADPEWAKTTVNGMPALRETDTFDTFMESSWYYARYTCPEYKEGMLDSEAANYWLPVDIYIGGIEHAIMHLLYFRFFHKLMRDAGMVNSDEPAKQLLCQGMVLADAFYYVGENGERNWVSPVDAIVERDEKGRIVKAKDAAGHELVYTGMSKMSKSKNNGIDPQVMVERYGADTVRLFMMFASPADMTLEWQESGVEGANRFLKRVWKLVYEHTAKGDVAALNVDALTEDQKALRRDVHKTIAKVTDDIGRRQTFNTAIAAIMELMNKLAKAPTDGEQDRALMQEALLAVVRMLNPFTPHICFTLWQELKGEGDIDNAPWPVADEKAMVEDSTLVVVQVNGKVRAKITVLVDATEEQVRERAGQEHLVAKYLDGVTVRKVIYVPGKLLNLVVG.

The short motif at 42–52 (PYPSGRLHMGH) is the 'HIGH' region element. Residues 619–623 (KMSKS) carry the 'KMSKS' region motif. Lys-622 provides a ligand contact to ATP.

This sequence belongs to the class-I aminoacyl-tRNA synthetase family.

It localises to the cytoplasm. The catalysed reaction is tRNA(Leu) + L-leucine + ATP = L-leucyl-tRNA(Leu) + AMP + diphosphate. The chain is Leucine--tRNA ligase from Shigella sonnei (strain Ss046).